The chain runs to 283 residues: MAVPPTYADLGKSARDVFTKGYGFGLIKLDLKTKSENGLEFTSSGSANTETTKVTGSLETKYRWTEYGLTFTEKWNTDNTLGTEITVEDQLARGLKLTFDSSFSPNTGKKNAKIKTGYKREHVNLGCDVDFDIAGPSIRGALVLGYEGWLAGYQMNFETAKSRVTQSNFAVGYKTDEFQLHTNVNDGTEFGGSIYQKVNKKLETAVNLAWTAGNSNTRFGIAAKYQIDPDACFSAKVNNSSLIGLGYTQTLKPGIKLTLSALLDGKNVNAGGHKLGLGLEFQA.

At Ala-2 the chain carries N-acetylalanine. An ATP-binding site is contributed by Lys-12. A Glycyl lysine isopeptide (Lys-Gly) (interchain with G-Cter in ubiquitin) cross-link involves residue Lys-12. Position 13 is a phosphoserine (Ser-13). Thr-19 is subject to Phosphothreonine. Lys-20 is an ATP binding site. At Lys-20 the chain carries N6-acetyllysine; alternate. At Lys-20 the chain carries N6-succinyllysine; alternate. A Glycyl lysine isopeptide (Lys-Gly) (interchain with G-Cter in ubiquitin); alternate cross-link involves residue Lys-20. 2 consecutive transmembrane segments (beta stranded) span residues 26-35 (LIKLDLKTKS) and 39-47 (LEFTSSGSA). Residues Lys-53 and Lys-61 each participate in a glycyl lysine isopeptide (Lys-Gly) (interchain with G-Cter in ubiquitin) cross-link. A beta stranded membrane pass occupies residues 54 to 64 (VTGSLETKYRW). Tyr-67 is modified (phosphotyrosine). 3 beta stranded membrane passes run 69–76 (LTFTEKWN), 80–89 (TLGTEITVED), and 95–104 (LKLTFDSSFS). Position 107 is a phosphothreonine (Thr-107). N6-acetyllysine; alternate is present on Lys-109. Lys-109 participates in a covalent cross-link: Glycyl lysine isopeptide (Lys-Gly) (interchain with G-Cter in ubiquitin); alternate. Lys-110 is covalently cross-linked (Glycyl lysine isopeptide (Lys-Gly) (interchain with G-Cter in ubiquitin)). 4 consecutive transmembrane segments (beta stranded) span residues 111–120 (NAKIKTGYKR), 123–130 (VNLGCDVD), 137–145 (SIRGALVLG), and 150–158 (LAGYQMNFE). Lys-161 participates in a covalent cross-link: Glycyl lysine isopeptide (Lys-Gly) (interchain with G-Cter in ubiquitin). Beta stranded transmembrane passes span 163–175 (RVTQ…GYKT), 178–185 (FQLHTNVN), 189–198 (EFGGSIYQKV), 202–211 (LETAVNLAWT), 218–227 (RFGIAAKYQI), and 231–238 (ACFSAKVN). Ser-193 bears the Phosphoserine; by NEK1 mark. Ser-240 is subject to Phosphoserine. 242–244 (LIG) contacts NAD(+). The chain crosses the membrane as a beta stranded span at residues 242–251 (LIGLGYTQTL). Lys-252 is subject to N6-acetyllysine. Residues 254-263 (GIKLTLSALL) traverse the membrane as a beta stranded segment. 260–264 (SALLD) contributes to the NAD(+) binding site. At Lys-266 the chain carries N6-acetyllysine; alternate. A Glycyl lysine isopeptide (Lys-Gly) (interchain with G-Cter in ubiquitin); alternate cross-link involves residue Lys-266. A beta stranded transmembrane segment spans residues 273–282 (HKLGLGLEFQ). Lys-274 participates in a covalent cross-link: Glycyl lysine isopeptide (Lys-Gly) (interchain with G-Cter in ubiquitin).

This sequence belongs to the eukaryotic mitochondrial porin family. In terms of assembly, homodimer and homotrimer; in response to cyclic AMP or calcium; oligomerization is required for scramblase activity. Component of the mitochondrial permeability transition pore complex (mPTPC), at least composed of SPG7, VDAC1 and PPIF. Interacts with SPG7, NIPSNAP2 and SLC25A30. Interacts with hexokinases including HK1. The HK1-VDAC1 complex interacts with ATF2. Interacts with BCL2L1. Interacts with BAK1. Interacts with RTL10/BOP (via BH3 domain). Interacts with amyloid-beta and APP; induces VDAC1 dephosphorylation. Interacts with TMEM41B. Interacts with BCAP31. Interacts with HSPA9; this interaction couples ITPR1 to VDAC1. Phosphorylation at Ser-193 by NEK1 promotes the closed conformational state preventing excessive mitochondrial membrane permeability and subsequent apoptotic cell death after injury. Phosphorylation by the AKT-GSK3B axis stabilizes the protein probably by preventing ubiquitin-mediated proteasomal degradation. In terms of processing, ubiquitinated. Undergoes monoubiquitination and polyubiquitination by PRKN; monoubiquitination at Lys-274 inhibits apoptosis, whereas polyubiquitination leads to its degradation and promotes mitophagy. Deubiquitinated by USP30.

Its subcellular location is the mitochondrion outer membrane. It localises to the cell membrane. It is found in the membrane raft. It catalyses the reaction chloride(in) = chloride(out). The enzyme catalyses K(+)(in) = K(+)(out). The catalysed reaction is ATP(in) = ATP(out). It carries out the reaction Ca(2+)(in) = Ca(2+)(out). It catalyses the reaction Na(+)(in) = Na(+)(out). The enzyme catalyses Mg(2+)(in) = Mg(2+)(out). The catalysed reaction is L-glutamate(out) = L-glutamate(in). It carries out the reaction dopamine(out) = dopamine(in). It catalyses the reaction acetylcholine(in) = acetylcholine(out). The enzyme catalyses Fe(III)-[cytochrome c](out) = Fe(III)-[cytochrome c](in). The catalysed reaction is a 1,2-diacyl-sn-glycero-3-phosphocholine(in) = a 1,2-diacyl-sn-glycero-3-phosphocholine(out). It carries out the reaction a 1,2-diacyl-sn-glycero-3-phospho-L-serine(in) = a 1,2-diacyl-sn-glycero-3-phospho-L-serine(out). Inhibited by nitric oxide. Non-selective voltage-gated ion channel that mediates the transport of anions and cations through the mitochondrion outer membrane and plasma membrane. The channel at the outer mitochondrial membrane allows diffusion of small hydrophilic molecules; in the plasma membrane it is involved in cell volume regulation and apoptosis. It adopts an open conformation at low or zero membrane potential and a closed conformation at potentials above 30-40 mV. The open state has a weak anion selectivity whereas the closed state is cation-selective. Binds various signaling molecules, including the sphingolipid ceramide, the phospholipid phosphatidylcholine, and the sterols cholesterol and oxysterol. In depolarized mitochondria, acts downstream of PRKN and PINK1 to promote mitophagy or prevent apoptosis; polyubiquitination by PRKN promotes mitophagy, while monoubiquitination by PRKN decreases mitochondrial calcium influx which ultimately inhibits apoptosis. May participate in the formation of the permeability transition pore complex (PTPC) responsible for the release of mitochondrial products that triggers apoptosis. May mediate ATP export from cells. Part of a complex composed of HSPA9, ITPR1 and VDAC1 that regulates mitochondrial calcium-dependent apoptosis by facilitating calcium transport from the ER lumen to the mitochondria intermembrane space thus providing calcium for the downstream calcium channel MCU that directly releases it into mitochondria matrix. Mediates cytochrome c efflux. Its function is as follows. Catalyzes the scrambling of phospholipids across the outer mitochondrial membrane; the mechanism is unrelated to channel activity and is capable of translocating both anionic and zwitterionic phospholipids. The chain is Non-selective voltage-gated ion channel VDAC1 from Sus scrofa (Pig).